The primary structure comprises 795 residues: Phenylalanine--tRNA ligase beta subunit (795 aa).

The tRNA-binding domain maps to 39–148; the sequence is AGEFNGVVVG…ADAPIGVDVR (110 aa). In terms of domain architecture, B5 spans 401-476; that stretch reads PKQATITLRR…RIYGYNNIPD (76 aa). Mg(2+) contacts are provided by Asp-454, Asp-460, Glu-463, and Glu-464. An FDX-ACB domain is found at 701–794; that stretch reads SRFPANRRDI…LKQRFQASLR (94 aa).

Belongs to the phenylalanyl-tRNA synthetase beta subunit family. Type 1 subfamily. In terms of assembly, tetramer of two alpha and two beta subunits. The cofactor is Mg(2+).

The protein localises to the cytoplasm. It catalyses the reaction tRNA(Phe) + L-phenylalanine + ATP = L-phenylalanyl-tRNA(Phe) + AMP + diphosphate + H(+). This Yersinia pestis protein is Phenylalanine--tRNA ligase beta subunit.